The chain runs to 133 residues: MSTVNLDIVTPNGSVYEKDDVELVVFQTTAGEMGVMSGHIPTVAALKTGHVKVNFRNGTEYIAVSGGFVEIRQHKVSVIVQTAETASEIDVERAKLARQRAQSHLEDQDNSDINRAKRALARAENRLRVAELK.

Belongs to the ATPase epsilon chain family. As to quaternary structure, F-type ATPases have 2 components, CF(1) - the catalytic core - and CF(0) - the membrane proton channel. CF(1) has five subunits: alpha(3), beta(3), gamma(1), delta(1), epsilon(1). CF(0) has three main subunits: a, b and c.

The protein resides in the cell membrane. In terms of biological role, produces ATP from ADP in the presence of a proton gradient across the membrane. In Staphylococcus haemolyticus (strain JCSC1435), this protein is ATP synthase epsilon chain.